We begin with the raw amino-acid sequence, 509 residues long: MNEQQRLASQQVNSSTKKEEKDYSKYFESVYQPPSLKDAKKRGKEEVKIERDFGLPEEFRNFGTGRKFYIRTYGCQMNEHDTEVMAGIFTALGYEPTFSTEDADVVLLNTCAIRENAENKVFGELGHLKSLKRRNSDLLIGVCGCMSQEESVVNKIMQKNQHVDMVFGTHNIHRLPYILKDAMFSKETVVEVWSKEGDVIENLPKVRRGDIKAWVNIMYGCDKFCTYCIVPYTRGKERSRRPEDIIQEIRHLAANGYKEITLLGQNVNAYGKDFEDIEYGLGDLMDELRKVDIARIRFTTSHPRDFDDHLIEVLGKGGNLVEHIHLPVQSGSTEMLKIMARKYSREHYLELVRKIKEAIPNAVLTTDIIVGFPNETDEQFEETMSLYREVGFDTAFTFIYSPREGTPAAKMKDNVPMEVKKERLQRLNALVNKLAIEKNDRYKGQIVEVLVDGESKNNPEVLAGYTRTNKLVNFVAPKSLIGQLVKIKVTDAKTWSLNGELVEEPIEVE.

Positions 1–15 (MNEQQRLASQQVNSS) are enriched in polar residues. The tract at residues 1 to 23 (MNEQQRLASQQVNSSTKKEEKDY) is disordered. The MTTase N-terminal domain occupies 66 to 184 (RKFYIRTYGC…LPYILKDAMF (119 aa)). [4Fe-4S] cluster is bound by residues Cys75, Cys111, Cys145, Cys221, Cys225, and Cys228. The region spanning 207–437 (RRGDIKAWVN…NALVNKLAIE (231 aa)) is the Radical SAM core domain. The 64-residue stretch at 440–503 (DRYKGQIVEV…TWSLNGELVE (64 aa)) folds into the TRAM domain.

The protein belongs to the methylthiotransferase family. MiaB subfamily. In terms of assembly, monomer. [4Fe-4S] cluster is required as a cofactor.

It is found in the cytoplasm. The enzyme catalyses N(6)-dimethylallyladenosine(37) in tRNA + (sulfur carrier)-SH + AH2 + 2 S-adenosyl-L-methionine = 2-methylsulfanyl-N(6)-dimethylallyladenosine(37) in tRNA + (sulfur carrier)-H + 5'-deoxyadenosine + L-methionine + A + S-adenosyl-L-homocysteine + 2 H(+). Catalyzes the methylthiolation of N6-(dimethylallyl)adenosine (i(6)A), leading to the formation of 2-methylthio-N6-(dimethylallyl)adenosine (ms(2)i(6)A) at position 37 in tRNAs that read codons beginning with uridine. The protein is tRNA-2-methylthio-N(6)-dimethylallyladenosine synthase of Bacillus anthracis.